The primary structure comprises 190 residues: RNA pyrophosphohydrolase (190 aa).

The Nudix hydrolase domain maps to 6 to 149 (GYRPNVGIVL…KRSVYARALC (144 aa)). Residues 38–59 (GGMHSDETPVEAMYRELNEETG) carry the Nudix box motif.

Belongs to the Nudix hydrolase family. RppH subfamily. Requires a divalent metal cation as cofactor.

Functionally, accelerates the degradation of transcripts by removing pyrophosphate from the 5'-end of triphosphorylated RNA, leading to a more labile monophosphorylated state that can stimulate subsequent ribonuclease cleavage. The polypeptide is RNA pyrophosphohydrolase (Xylella fastidiosa (strain Temecula1 / ATCC 700964)).